Reading from the N-terminus, the 475-residue chain is MNGPSPRSSHLSQPVVKSVLVYRNGDPFFAGRRVVIHEKKVSSFDIFLKEVTGGVQAPFGAVRNIYTPRTGHRIRKLDQIESGGNYVAGGQEAFKKLNYLDIGEIKKRPMEAVNTEVKPVIHSKINVSARFRKALHEPCTIFLIANGDLISPASRLLIPRKALNQWDHVLQMVTEKITLRSGAVHRLYTLEGKLVESGAELENGQFYVAVGRDKFKRLPYSELLFDKSAMRRPYGQKASSLPPMVGSRKSKGSGNYRQSKSTIGSSDNSSPQPLKRKGKKDSNSEKPTKVKQSVKSKNSHQAIPDNDEGIFKAGAERSETRGAAEVQEDEDTQVEVPVDQRPAEIVDEEEDGEKTSKDANQKDDFSAMNGEAEDRAGSKVADAPEEEEGIPDQGEKKASPSRVNGGTDEENGEELDQVTEELQPTVDEKGKAEGDNSAQDEAGLDAQRPPRPEVTVTSPQENEGNESNKASSAVA.

Doublecortin domains are found at residues 17 to 100 (KSVL…LNYL) and 139 to 221 (CTIF…LPYS). A disordered region spans residues 234–475 (YGQKASSLPP…ESNKASSAVA (242 aa)). A compositionally biased stretch (polar residues) spans 252-272 (GSGNYRQSKSTIGSSDNSSPQ). The residue at position 270 (Ser-270) is a Phosphoserine. Basic and acidic residues predominate over residues 353-365 (EKTSKDANQKDDF). Over residues 407–419 (TDEENGEELDQVT) the composition is skewed to acidic residues. Residues 455–475 (TVTSPQENEGNESNKASSAVA) are compositionally biased toward polar residues.

As to quaternary structure, interacts with DVL1, DVL2 and DVL3. As to expression, expressed in hair cells of the inner ear.

The protein localises to the cell projection. The protein resides in the cilium. It is found in the cytoplasm. Its subcellular location is the cytoskeleton. It localises to the cilium axoneme. The protein localises to the kinocilium. In terms of biological role, protein that plays a role in the inhibition of canonical Wnt signaling pathway. May be involved in neuronal migration during development of the cerebral neocortex. Involved in the control of ciliogenesis and ciliary length. The sequence is that of Doublecortin domain-containing protein 2 (Dcdc2) from Rattus norvegicus (Rat).